Reading from the N-terminus, the 314-residue chain is 4-hydroxy-3-methylbut-2-enyl diphosphate reductase (314 aa).

Cys-12 provides a ligand contact to [4Fe-4S] cluster. 2 residues coordinate (2E)-4-hydroxy-3-methylbut-2-enyl diphosphate: His-43 and His-81. Dimethylallyl diphosphate contacts are provided by His-43 and His-81. 2 residues coordinate isopentenyl diphosphate: His-43 and His-81. Cys-103 is a [4Fe-4S] cluster binding site. Residue His-131 coordinates (2E)-4-hydroxy-3-methylbut-2-enyl diphosphate. His-131 provides a ligand contact to dimethylallyl diphosphate. His-131 lines the isopentenyl diphosphate pocket. Glu-133 serves as the catalytic Proton donor. Thr-170 is a (2E)-4-hydroxy-3-methylbut-2-enyl diphosphate binding site. Cys-198 is a [4Fe-4S] cluster binding site. The (2E)-4-hydroxy-3-methylbut-2-enyl diphosphate site is built by Ser-226, Asn-228, and Ser-271. Residues Ser-226, Asn-228, and Ser-271 each contribute to the dimethylallyl diphosphate site. 3 residues coordinate isopentenyl diphosphate: Ser-226, Asn-228, and Ser-271.

It belongs to the IspH family. [4Fe-4S] cluster serves as cofactor.

The catalysed reaction is isopentenyl diphosphate + 2 oxidized [2Fe-2S]-[ferredoxin] + H2O = (2E)-4-hydroxy-3-methylbut-2-enyl diphosphate + 2 reduced [2Fe-2S]-[ferredoxin] + 2 H(+). It carries out the reaction dimethylallyl diphosphate + 2 oxidized [2Fe-2S]-[ferredoxin] + H2O = (2E)-4-hydroxy-3-methylbut-2-enyl diphosphate + 2 reduced [2Fe-2S]-[ferredoxin] + 2 H(+). The protein operates within isoprenoid biosynthesis; dimethylallyl diphosphate biosynthesis; dimethylallyl diphosphate from (2E)-4-hydroxy-3-methylbutenyl diphosphate: step 1/1. Its pathway is isoprenoid biosynthesis; isopentenyl diphosphate biosynthesis via DXP pathway; isopentenyl diphosphate from 1-deoxy-D-xylulose 5-phosphate: step 6/6. Functionally, catalyzes the conversion of 1-hydroxy-2-methyl-2-(E)-butenyl 4-diphosphate (HMBPP) into a mixture of isopentenyl diphosphate (IPP) and dimethylallyl diphosphate (DMAPP). Acts in the terminal step of the DOXP/MEP pathway for isoprenoid precursor biosynthesis. In Shouchella clausii (strain KSM-K16) (Alkalihalobacillus clausii), this protein is 4-hydroxy-3-methylbut-2-enyl diphosphate reductase.